Here is a 190-residue protein sequence, read N- to C-terminus: Peptide deformylase (190 aa).

Residues cysteine 94 and histidine 136 each contribute to the Fe cation site. Glutamate 137 is an active-site residue. Residue histidine 140 coordinates Fe cation.

Belongs to the polypeptide deformylase family. Fe(2+) serves as cofactor.

It catalyses the reaction N-terminal N-formyl-L-methionyl-[peptide] + H2O = N-terminal L-methionyl-[peptide] + formate. Functionally, removes the formyl group from the N-terminal Met of newly synthesized proteins. Requires at least a dipeptide for an efficient rate of reaction. N-terminal L-methionine is a prerequisite for activity but the enzyme has broad specificity at other positions. The sequence is that of Peptide deformylase from Chlorobium phaeovibrioides (strain DSM 265 / 1930) (Prosthecochloris vibrioformis (strain DSM 265)).